A 146-amino-acid chain; its full sequence is Large ribosomal subunit protein uL15 (146 aa).

Residues 1–13 (MKLHELKPSEGSR) are compositionally biased toward basic and acidic residues. Residues 1–54 (MKLHELKPSEGSRKVRNRVGRGIGSGNGKTAGKGHKGQNARSGGGVRPGFEGGQ) are disordered. Composition is skewed to gly residues over residues 21 to 31 (RGIGSGNGKTA) and 42 to 52 (SGGGVRPGFEG).

The protein belongs to the universal ribosomal protein uL15 family. Part of the 50S ribosomal subunit.

Binds to the 23S rRNA. This Bacillus velezensis (strain DSM 23117 / BGSC 10A6 / LMG 26770 / FZB42) (Bacillus amyloliquefaciens subsp. plantarum) protein is Large ribosomal subunit protein uL15.